Reading from the N-terminus, the 214-residue chain is Adenylate kinase (214 aa).

10–15 (GAGKGT) contacts ATP. The NMP stretch occupies residues 30-59 (STGDMLRSAVKAGTELGLKAKALMDHGKLV). Residues T31, R36, 57 to 59 (KLV), 85 to 88 (GFPR), and Q92 each bind AMP. The segment at 122–159 (GRRIHAPSGRVYHIKFNPPVVENKDDVTGEELTVRKDD) is LID. Residues R123 and 132 to 133 (VY) each bind ATP. Residues R156 and R167 each coordinate AMP. R200 provides a ligand contact to ATP.

Belongs to the adenylate kinase family. In terms of assembly, monomer.

The protein resides in the cytoplasm. The enzyme catalyses AMP + ATP = 2 ADP. The protein operates within purine metabolism; AMP biosynthesis via salvage pathway; AMP from ADP: step 1/1. Functionally, catalyzes the reversible transfer of the terminal phosphate group between ATP and AMP. Plays an important role in cellular energy homeostasis and in adenine nucleotide metabolism. This Photorhabdus laumondii subsp. laumondii (strain DSM 15139 / CIP 105565 / TT01) (Photorhabdus luminescens subsp. laumondii) protein is Adenylate kinase.